The chain runs to 883 residues: Integrator complex subunit 6-B (883 aa).

Residues 3–227 (ILLFLLDTSA…QCLESLVQKI (225 aa)) form the VWFA domain. Positions 626-633 (MMIDEADE) match the Inhibitory loop motif.

This sequence belongs to the Integrator subunit 6 family. In terms of assembly, component of the Integrator complex, composed of core subunits INTS1, INTS2, INTS3, INTS4, INTS5, INTS6, INTS7, INTS8, INTS9/RC74, INTS10, INTS11/CPSF3L, INTS12, INTS13, INTS14 and INTS15. The core complex associates with protein phosphatase 2A subunits PPP2CA and PPP2R1A, to form the Integrator-PP2A (INTAC) complex.

The protein localises to the nucleus. It is found in the chromosome. Functionally, component of the integrator complex, a multiprotein complex that terminates RNA polymerase II (Pol II) transcription in the promoter-proximal region of genes. The integrator complex provides a quality checkpoint during transcription elongation by driving premature transcription termination of transcripts that are unfavorably configured for transcriptional elongation: the complex terminates transcription by (1) catalyzing dephosphorylation of the C-terminal domain (CTD) of Pol II subunit POLR2A/RPB1 and SUPT5H/SPT5, (2) degrading the exiting nascent RNA transcript via endonuclease activity and (3) promoting the release of Pol II from bound DNA. The integrator complex is also involved in terminating the synthesis of non-coding Pol II transcripts, such as enhancer RNAs (eRNAs), small nuclear RNAs (snRNAs), telomerase RNAs and long non-coding RNAs (lncRNAs). Within the integrator complex, INTS6 acts as a molecular adapter that promotes assembly of protein phosphatase 2A (PP2A) subunits to the integrator core complex, promoting recruitment of PP2A to transcription pause-release checkpoint. The protein is Integrator complex subunit 6-B (ints6-b) of Xenopus laevis (African clawed frog).